The sequence spans 616 residues: DEAD-box ATP-dependent RNA helicase 53, mitochondrial (616 aa).

The N-terminal 81 residues, 1–81 (MITTVLRRSL…DFRASMVSQA (81 aa)), are a transit peptide targeting the mitochondrion. The short motif at 104–132 (LAISELGISPEIVKALSSKGIEKLFPIQK) is the Q motif element. The region spanning 135–309 (LEPAMEGRDM…KKYLNNPLTV (175 aa)) is the Helicase ATP-binding domain. Residue 148–155 (ARTGTGKT) participates in ATP binding. The DEAD box signature appears at 257 to 260 (DEAD). Positions 338-482 (IIGPLVTEHA…ELPSIAVERG (145 aa)) constitute a Helicase C-terminal domain. The segment at 489-616 (GIGSRSGGSF…FGSNDGKRSY (128 aa)) is disordered. 2 stretches are compositionally biased toward gly residues: residues 492–501 (SRSGGSFGGG) and 508–531 (SFGGRSGGGGYGGSSGGYGGGRSG). 2 stretches are compositionally biased toward low complexity: residues 532 to 568 (GSSNRYSGDSDRSGFGSFGMRSPEGYGSDRSSQSGGR) and 578 to 587 (GSSNNRSSGF).

It belongs to the DEAD box helicase family. DDX21/DDX50 subfamily.

The protein resides in the mitochondrion. The catalysed reaction is ATP + H2O = ADP + phosphate + H(+). The polypeptide is DEAD-box ATP-dependent RNA helicase 53, mitochondrial (RH53) (Arabidopsis thaliana (Mouse-ear cress)).